The primary structure comprises 293 residues: Diaminopimelate epimerase (293 aa).

Residues Asn17, Gln47, and Asn67 each contribute to the substrate site. Catalysis depends on Cys76, which acts as the Proton donor. Substrate is bound by residues 77-78 (GN), Asn164, Asn197, and 215-216 (ER). The active-site Proton acceptor is Cys224. 225–226 (GS) lines the substrate pocket.

It belongs to the diaminopimelate epimerase family. As to quaternary structure, homodimer.

The protein localises to the cytoplasm. It carries out the reaction (2S,6S)-2,6-diaminopimelate = meso-2,6-diaminopimelate. The protein operates within amino-acid biosynthesis; L-lysine biosynthesis via DAP pathway; DL-2,6-diaminopimelate from LL-2,6-diaminopimelate: step 1/1. Its function is as follows. Catalyzes the stereoinversion of LL-2,6-diaminopimelate (L,L-DAP) to meso-diaminopimelate (meso-DAP), a precursor of L-lysine and an essential component of the bacterial peptidoglycan. The chain is Diaminopimelate epimerase from Rhodopseudomonas palustris (strain HaA2).